A 258-amino-acid chain; its full sequence is Imidazole glycerol phosphate synthase subunit HisF (258 aa).

Catalysis depends on residues Asp12 and Asp131.

It belongs to the HisA/HisF family. As to quaternary structure, heterodimer of HisH and HisF.

It is found in the cytoplasm. It catalyses the reaction 5-[(5-phospho-1-deoxy-D-ribulos-1-ylimino)methylamino]-1-(5-phospho-beta-D-ribosyl)imidazole-4-carboxamide + L-glutamine = D-erythro-1-(imidazol-4-yl)glycerol 3-phosphate + 5-amino-1-(5-phospho-beta-D-ribosyl)imidazole-4-carboxamide + L-glutamate + H(+). It functions in the pathway amino-acid biosynthesis; L-histidine biosynthesis; L-histidine from 5-phospho-alpha-D-ribose 1-diphosphate: step 5/9. In terms of biological role, IGPS catalyzes the conversion of PRFAR and glutamine to IGP, AICAR and glutamate. The HisF subunit catalyzes the cyclization activity that produces IGP and AICAR from PRFAR using the ammonia provided by the HisH subunit. The protein is Imidazole glycerol phosphate synthase subunit HisF of Corynebacterium diphtheriae (strain ATCC 700971 / NCTC 13129 / Biotype gravis).